Consider the following 228-residue polypeptide: UPF0758 protein SH1266 (228 aa).

The MPN domain maps to 102–224; sequence KITSPSDVSN…YASLVEEGYF (123 aa). Positions 173, 175, and 186 each coordinate Zn(2+). A JAMM motif motif is present at residues 173–186; it reads HNHPSGDVTPSKED.

This sequence belongs to the UPF0758 family.

The protein is UPF0758 protein SH1266 of Staphylococcus haemolyticus (strain JCSC1435).